The primary structure comprises 365 residues: Carbamoyl phosphate synthase small chain (365 aa).

CPSase regions lie at residues 1 to 166 and 1 to 169; these read MKRQ…PSPG and MKRQ…GRGH. L-glutamine is bound by residues serine 45, glycine 218, and glycine 220. The Glutamine amidotransferase type-1 domain occupies 170–357; it reads RVVLVDFGMK…LTMIENFKKE (188 aa). Cysteine 245 (nucleophile) is an active-site residue. Leucine 246, glutamine 249, asparagine 287, glycine 289, and tyrosine 290 together coordinate L-glutamine. Active-site residues include histidine 330 and glutamate 332.

It belongs to the CarA family. As to quaternary structure, composed of two chains; the small (or glutamine) chain promotes the hydrolysis of glutamine to ammonia, which is used by the large (or ammonia) chain to synthesize carbamoyl phosphate. Tetramer of heterodimers (alpha,beta)4.

It catalyses the reaction hydrogencarbonate + L-glutamine + 2 ATP + H2O = carbamoyl phosphate + L-glutamate + 2 ADP + phosphate + 2 H(+). The catalysed reaction is L-glutamine + H2O = L-glutamate + NH4(+). It functions in the pathway amino-acid biosynthesis; L-arginine biosynthesis; carbamoyl phosphate from bicarbonate: step 1/1. The protein operates within pyrimidine metabolism; UMP biosynthesis via de novo pathway; (S)-dihydroorotate from bicarbonate: step 1/3. Functionally, small subunit of the glutamine-dependent carbamoyl phosphate synthetase (CPSase). CPSase catalyzes the formation of carbamoyl phosphate from the ammonia moiety of glutamine, carbonate, and phosphate donated by ATP, constituting the first step of 2 biosynthetic pathways, one leading to arginine and/or urea and the other to pyrimidine nucleotides. The small subunit (glutamine amidotransferase) binds and cleaves glutamine to supply the large subunit with the substrate ammonia. This chain is Carbamoyl phosphate synthase small chain, found in Bacillus cereus (strain ZK / E33L).